Reading from the N-terminus, the 316-residue chain is Pantothenate kinase (316 aa).

95 to 102 serves as a coordination point for ATP; sequence GSVSVGKS.

The protein belongs to the prokaryotic pantothenate kinase family.

Its subcellular location is the cytoplasm. The catalysed reaction is (R)-pantothenate + ATP = (R)-4'-phosphopantothenate + ADP + H(+). Its pathway is cofactor biosynthesis; coenzyme A biosynthesis; CoA from (R)-pantothenate: step 1/5. This chain is Pantothenate kinase, found in Actinobacillus pleuropneumoniae serotype 7 (strain AP76).